The sequence spans 337 residues: GTP 3',8-cyclase (337 aa).

A Radical SAM core domain is found at 17-242 (AFQRRYYYLR…QSKGLLDGPA (226 aa)). Arg26 lines the GTP pocket. 2 residues coordinate [4Fe-4S] cluster: Cys33 and Cys37. Tyr39 is a binding site for S-adenosyl-L-methionine. A [4Fe-4S] cluster-binding site is contributed by Cys40. GTP is bound at residue Arg76. Residue Gly80 participates in S-adenosyl-L-methionine binding. Thr107 contributes to the GTP binding site. S-adenosyl-L-methionine is bound at residue Ser131. Position 168 (Lys168) interacts with GTP. Met202 contributes to the S-adenosyl-L-methionine binding site. Cys265 and Cys268 together coordinate [4Fe-4S] cluster. 270-272 (RLR) contacts GTP. Cys282 contacts [4Fe-4S] cluster.

This sequence belongs to the radical SAM superfamily. MoaA family. Monomer and homodimer. [4Fe-4S] cluster is required as a cofactor.

The catalysed reaction is GTP + AH2 + S-adenosyl-L-methionine = (8S)-3',8-cyclo-7,8-dihydroguanosine 5'-triphosphate + 5'-deoxyadenosine + L-methionine + A + H(+). It functions in the pathway cofactor biosynthesis; molybdopterin biosynthesis. In terms of biological role, catalyzes the cyclization of GTP to (8S)-3',8-cyclo-7,8-dihydroguanosine 5'-triphosphate. This Pasteurella multocida (strain Pm70) protein is GTP 3',8-cyclase.